The sequence spans 311 residues: Forkhead box protein I2 (311 aa).

A DNA-binding region (fork-head) is located at residues 99–193 (RPPYSYSALI…DNGNFRRKRR (95 aa)). Disordered regions lie at residues 188–237 (FRRK…TTTC) and 263–294 (FSLRRPPPTAAAHSPQIPNTAPGFAPGHQTGA). Residues 219 to 231 (STPQDPQTSPSPS) show a composition bias toward low complexity.

Its subcellular location is the nucleus. In terms of biological role, possible transcriptional activator. This chain is Forkhead box protein I2, found in Mus musculus (Mouse).